The primary structure comprises 243 residues: Small ribosomal subunit protein eS4 (243 aa).

Positions Ile43–Asn105 constitute an S4 RNA-binding domain.

Belongs to the eukaryotic ribosomal protein eS4 family. In terms of assembly, part of the 30S ribosomal subunit.

This chain is Small ribosomal subunit protein eS4, found in Pyrococcus furiosus (strain ATCC 43587 / DSM 3638 / JCM 8422 / Vc1).